A 198-amino-acid chain; its full sequence is ATP-dependent Clp protease proteolytic subunit (198 aa).

Ser-98 (nucleophile) is an active-site residue. The active site involves His-123.

It belongs to the peptidase S14 family. In terms of assembly, fourteen ClpP subunits assemble into 2 heptameric rings which stack back to back to give a disk-like structure with a central cavity, resembling the structure of eukaryotic proteasomes.

The protein resides in the cytoplasm. It catalyses the reaction Hydrolysis of proteins to small peptides in the presence of ATP and magnesium. alpha-casein is the usual test substrate. In the absence of ATP, only oligopeptides shorter than five residues are hydrolyzed (such as succinyl-Leu-Tyr-|-NHMec, and Leu-Tyr-Leu-|-Tyr-Trp, in which cleavage of the -Tyr-|-Leu- and -Tyr-|-Trp bonds also occurs).. Cleaves peptides in various proteins in a process that requires ATP hydrolysis. Has a chymotrypsin-like activity. Plays a major role in the degradation of misfolded proteins. In Levilactobacillus brevis (strain ATCC 367 / BCRC 12310 / CIP 105137 / JCM 1170 / LMG 11437 / NCIMB 947 / NCTC 947) (Lactobacillus brevis), this protein is ATP-dependent Clp protease proteolytic subunit.